The chain runs to 223 residues: Putative endonuclease segD (223 aa).

The GIY-YIG domain occupies 4–87 (MKYLIYQITN…FVMRTDTYNA (84 aa)).

It to endonucleases of group I introns of fungi and phage. Requires Mg(2+) as cofactor.

Functionally, probably involved in the movement of the endonuclease-encoding DNA. The chain is Putative endonuclease segD (segD) from Enterobacteria phage T4 (Bacteriophage T4).